The primary structure comprises 450 residues: Glucose-6-phosphate isomerase (450 aa).

A Phosphothreonine modification is found at Thr39. The active-site Proton donor is the Glu291. Residues His312 and Lys426 contribute to the active site.

The protein belongs to the GPI family.

It is found in the cytoplasm. It carries out the reaction alpha-D-glucose 6-phosphate = beta-D-fructose 6-phosphate. It participates in carbohydrate biosynthesis; gluconeogenesis. Its pathway is carbohydrate degradation; glycolysis; D-glyceraldehyde 3-phosphate and glycerone phosphate from D-glucose: step 2/4. Catalyzes the reversible isomerization of glucose-6-phosphate to fructose-6-phosphate. This chain is Glucose-6-phosphate isomerase, found in Bacillus thuringiensis (strain Al Hakam).